Consider the following 433-residue polypeptide: Polygalacturonase ADPG2 (433 aa).

The N-terminal stretch at 1–24 is a signal peptide; the sequence is MARCTNLVTVFLLWALLMFSWCKA. PbH1 repeat units lie at residues 223 to 249, 250 to 271, 273 to 293, 303 to 324, and 332 to 353; these read CSNVQVSNVVVTAPADSPNTDGIHITN, TQNIRVSESIIGTGDDCISIES, SQNVQINDITCGPGHGISIGS, VSGVTVDGAKLSGTDNGVRIKT, and ASNIIFQNIQMDNVKNPIIIDQ. D264 acts as the Proton donor in catalysis. The active site involves H287.

This sequence belongs to the glycosyl hydrolase 28 family. Expressed in roots and in the abscission zone of the sepals, petals and stamens of flowers, at the base of cauline leaves and in the basal cell of trichomes from senescing leaves. Found at the site of lateral root emergence, in the dehiscence zone of anthers and maturing siliques. Also expressed early in anther development, at the time of microspore separation. Expressed in germinating seeds, at the point at which the radicle broke through the seed coat. Not expressed at the junction between the seed and the funiculus or in the dehiscence zone of anthers or pods.

It is found in the secreted. The protein localises to the cell wall. It carries out the reaction (1,4-alpha-D-galacturonosyl)n+m + H2O = (1,4-alpha-D-galacturonosyl)n + (1,4-alpha-D-galacturonosyl)m.. Functionally, polygalacturonase involved in cell separation in the final stages of pod shatter, in anther dehiscence and in floral organ abscission. This Arabidopsis thaliana (Mouse-ear cress) protein is Polygalacturonase ADPG2 (ADPG2).